A 259-amino-acid polypeptide reads, in one-letter code: UPF0246 protein PSPTO_1244 (259 aa).

Belongs to the UPF0246 family.

The protein is UPF0246 protein PSPTO_1244 of Pseudomonas syringae pv. tomato (strain ATCC BAA-871 / DC3000).